The following is a 207-amino-acid chain: N-(5'-phosphoribosyl)anthranilate isomerase (207 aa).

This sequence belongs to the TrpF family.

It catalyses the reaction N-(5-phospho-beta-D-ribosyl)anthranilate = 1-(2-carboxyphenylamino)-1-deoxy-D-ribulose 5-phosphate. Its pathway is amino-acid biosynthesis; L-tryptophan biosynthesis; L-tryptophan from chorismate: step 3/5. The chain is N-(5'-phosphoribosyl)anthranilate isomerase from Stutzerimonas stutzeri (strain A1501) (Pseudomonas stutzeri).